The sequence spans 1346 residues: Adhesion G protein-coupled receptor A3 (1346 aa).

The signal sequence occupies residues 1 to 21 (MSVLCVLLLAFVLPLRGSSSA). Positions 18-45 (SSSAGSTECKTYDERSRSAGKSSPSGAT) are disordered. The Extracellular portion of the chain corresponds to 22 to 739 (GSTECKTYDE…NVFIFRPLHP (718 aa)). LRR repeat units lie at residues 66-90 (FPNR…SFVG), 91-114 (LSSL…AFYG), 116-138 (FSLK…VFKG), and 139-162 (LTNL…IFDS). An LRRCT domain is found at 176–223 (LLCDCNLQWLVVWIKEKAIGVKETRCSFPRSLQGQLITTLRAETLTCD). In terms of domain architecture, Ig-like spans 229–327 (PSFQMTPSQH…GNNTRTVHIV (99 aa)). Cysteines 251 and 311 form a disulfide. 3 LRR repeats span residues 503–529 (LQRI…ALEA), 574–600 (TSNL…LFSS), and 611–632 (VYKL…GNSS). One can recognise a GAIN-B domain in the interval 563–728 (PERQLSFKCN…AVLMDLNRTG (166 aa)). The tract at residues 679-728 (PAFWNFSLQGGQGGWQSDGCRILHQDDNFTTVSCHSLNSYAVLMDLNRTG) is GPS. C698 and C712 are disulfide-bonded. A helical membrane pass occupies residues 740-760 (VIYSTALVLVLCLLSVIVSYI). The Cytoplasmic segment spans residues 761-773 (YHHKSVRISKKCW). A helical membrane pass occupies residues 774–794 (HMLVNLCLHILLTCAVFVGGI). Topologically, residues 795–804 (NQTYNASVCQ) are extracellular. The helical transmembrane segment at 805–825 (AMGIVLHYSTLATALWSGVTA) threads the bilayer. At 826-854 (RNIYKQVTRKAKRYEELDEPPPPPRPMLR) the chain is on the cytoplasmic side. The chain crosses the membrane as a helical span at residues 855-875 (FYLIGGGIPIIVCGITAAANI). Residues 876 to 897 (KNYGSQVNAPYCWMAWEPSLGA) are Extracellular-facing. The helical transmembrane segment at 898–918 (FYGPAAFIVFVDCMYFLSILI) threads the bilayer. Residues 919 to 977 (QLRRHPERRFELKEQSEEQQHLSVTEATEITPVHLESSPTAQPVPMSALENEHTFVSQL) lie on the Cytoplasmic side of the membrane. The helical transmembrane segment at 978 to 998 (MGVAGSLTLYAALWVFGALAI) threads the bilayer. At 999-1005 (SQEHPAD) the chain is on the extracellular side. Residues 1006 to 1026 (LVFACLFGALALGLGAFLVAH) form a helical membrane-spanning segment. At 1027 to 1346 (HCVNRQDMRR…TGLWKHETTV (320 aa)) the chain is on the cytoplasmic side. Polar residues predominate over residues 1157–1169 (SVNNNNLPGNANI). Disordered stretches follow at residues 1157 to 1188 (SVNN…RASR) and 1202 to 1284 (SVEG…DGSE). 2 stretches are compositionally biased toward basic residues: residues 1173 to 1187 (PGRH…HRAS) and 1212 to 1226 (NKRH…RNSR). Residues 1238 to 1252 (QSQLQQDSSDAASTS) show a composition bias toward low complexity. A compositionally biased stretch (gly residues) spans 1266–1280 (IGNGFGHGISNGGLL). The PDZ-binding motif lies at 1344–1346 (TTV).

It belongs to the G-protein coupled receptor 2 family. Adhesion G-protein coupled receptor (ADGR) subfamily. As to quaternary structure, interacts (via PDZ-binding motif) with disheveled proteins; leading to the localization of dishevelled proteins to specific membrane subdomains. In terms of tissue distribution, ubiquitously expressed at very low levels.

The protein resides in the cell membrane. In terms of biological role, orphan receptor that acts as a critical modulator of planar cell polarity during gastrulation. Controls the localization of dishevelled. This chain is Adhesion G protein-coupled receptor A3 (adgra3), found in Danio rerio (Zebrafish).